The following is an 87-amino-acid chain: Small ribosomal subunit protein bS21 (87 aa).

Over residues 47–63 the composition is skewed to basic and acidic residues; it reads YEKPSEKRARQKAEAVR. A disordered region spans residues 47–87; sequence YEKPSEKRARQKAEAVRRARKLARKRAQREGLLPMPKKPGR. Over residues 64 to 73 the composition is skewed to basic residues; the sequence is RARKLARKRA.

It belongs to the bacterial ribosomal protein bS21 family.

In Caulobacter vibrioides (strain ATCC 19089 / CIP 103742 / CB 15) (Caulobacter crescentus), this protein is Small ribosomal subunit protein bS21.